The sequence spans 213 residues: Adenylate kinase (213 aa).

Glycine 10–threonine 15 lines the ATP pocket. The interval serine 30–valine 59 is NMP. AMP-binding positions include threonine 31, arginine 36, alanine 57–valine 59, glycine 85–arginine 88, and glutamine 92. The tract at residues glycine 126–aspartate 163 is LID. Arginine 127 contacts ATP. The Zn(2+) site is built by cysteine 130, cysteine 133, cysteine 150, and cysteine 153. Residues arginine 160 and arginine 171 each coordinate AMP. Residue glycine 199 coordinates ATP.

It belongs to the adenylate kinase family. As to quaternary structure, monomer.

Its subcellular location is the cytoplasm. It carries out the reaction AMP + ATP = 2 ADP. It functions in the pathway purine metabolism; AMP biosynthesis via salvage pathway; AMP from ADP: step 1/1. Catalyzes the reversible transfer of the terminal phosphate group between ATP and AMP. Plays an important role in cellular energy homeostasis and in adenine nucleotide metabolism. In Syntrophobacter fumaroxidans (strain DSM 10017 / MPOB), this protein is Adenylate kinase.